Reading from the N-terminus, the 505-residue chain is MAQIDFRKKINWHRRYRSPQGVKTEHEILRIFESDRGRIINSPAIRRLQQKTQVFPLERNAAVRTRLTHSMEVQQVGRYIAKEILSRLKELKLLEAYGLDELTGPFESIVEMSCLMHDIGNPPFGHFGEAAINDWFRQRLHPEDAESQPLTDDRCSVAALRLRDGEEPLNELRRKIRQDLCHFEGNAQGIRLVHTLMRMNLTWAQVGGILKYTRPAWWRGETPETHHYLMKKPGYYLSEEAYIARLRKELNLALYSRFPLTWIMEAADDISYCVADLEDAVEKRIFTVEQLYHHLHEAWGQHEKGSLFSLVVENAWEKSRSNSLSRSTEDQFFMYLRVNTLNKLVPYAAQRFIDNLPAIFAGTFNHALLEDASECSDLLKLYKNVAVKHVFSHPDVERLELQGYRVISGLLEIYRPLLSLSLSDFTELVEKERVKRFPIESRLFHKLSTRHRLAYVEAVSKLPSDSPEFPLWEYYYRCRLLQDYISGMTDLYAWDEYRRLMAVEQ.

The region spanning 66–273 (RLTHSMEVQQ…MEAADDISYC (208 aa)) is the HD domain.

It belongs to the dGTPase family. Type 1 subfamily. As to quaternary structure, homotetramer. It depends on Mg(2+) as a cofactor.

It carries out the reaction dGTP + H2O = 2'-deoxyguanosine + triphosphate + H(+). Functionally, dGTPase preferentially hydrolyzes dGTP over the other canonical NTPs. This is Deoxyguanosinetriphosphate triphosphohydrolase from Escherichia coli (strain K12 / MC4100 / BW2952).